Consider the following 435-residue polypeptide: Ribulose bisphosphate carboxylase large chain (435 aa).

N6,N6,N6-trimethyllysine is present on Lys5. 2 residues coordinate substrate: Asn114 and Thr164. Catalysis depends on Lys166, which acts as the Proton acceptor. A substrate-binding site is contributed by Lys168. Mg(2+)-binding residues include Lys192, Asp194, and Glu195. Position 192 is an N6-carboxylysine (Lys192). Catalysis depends on His285, which acts as the Proton acceptor. Substrate is bound by residues Arg286, His318, and Ser370.

Belongs to the RuBisCO large chain family. Type I subfamily. Heterohexadecamer of 8 large chains and 8 small chains; disulfide-linked. The disulfide link is formed within the large subunit homodimers. Requires Mg(2+) as cofactor. Post-translationally, the disulfide bond which can form in the large chain dimeric partners within the hexadecamer appears to be associated with oxidative stress and protein turnover.

The protein localises to the plastid. Its subcellular location is the chloroplast. It catalyses the reaction 2 (2R)-3-phosphoglycerate + 2 H(+) = D-ribulose 1,5-bisphosphate + CO2 + H2O. The catalysed reaction is D-ribulose 1,5-bisphosphate + O2 = 2-phosphoglycolate + (2R)-3-phosphoglycerate + 2 H(+). Functionally, ruBisCO catalyzes two reactions: the carboxylation of D-ribulose 1,5-bisphosphate, the primary event in carbon dioxide fixation, as well as the oxidative fragmentation of the pentose substrate in the photorespiration process. Both reactions occur simultaneously and in competition at the same active site. The protein is Ribulose bisphosphate carboxylase large chain of Drosera burmannii (Burmese sundew).